A 299-amino-acid chain; its full sequence is Apolipoprotein E (299 aa).

The N-terminal stretch at 1–18 (MKVLCTVLVVTLLAGCRA) is a signal peptide. Positions 74–245 (VLMEDTMKAV…RLEEVREQME (172 aa)) are 8 X 22 AA approximate tandem repeats. Tandem repeats lie at residues 75–95 (LMED…QELV), 96–117 (PMAE…ARLG), 118–139 (ADME…AMLG), 140–161 (QSAE…KRML), 162–183 (RDAE…EGAE), 184–206 (RGVS…RAAL), 207–225 (TSQP…LRGR), and 224–242 (GRLE…EVRE). Position 137 is a methionine sulfoxide (methionine 137). Serine 141 is subject to Phosphoserine. Residues 152-162 (HLRKLRKRMLR) are LDL and other lipoprotein receptors binding. 156–159 (LRKR) is a binding site for heparin. Residues 205–273 (ALTSQPLQER…GWFEPMVEDM (69 aa)) are lipid-binding and lipoprotein association. 219-226 (GKQLRGRL) is a binding site for heparin. Residues 261–273 (RLKGWFEPMVEDM) form a specificity for association with VLDL region.

The protein belongs to the apolipoprotein A1/A4/E family. Homotetramer. May interact with ABCA1; functionally associated with ABCA1 in the biogenesis of HDLs. May interact with APP/A4 amyloid-beta peptide; the interaction is extremely stable in vitro but its physiological significance is unclear. May interact with MAPT. May interact with MAP2. In the cerebrospinal fluid, interacts with secreted SORL1. Interacts with PMEL; this allows the loading of PMEL luminal fragment on ILVs to induce fibril nucleation. In terms of processing, APOE exists as multiple glycosylated and sialylated glycoforms within cells and in plasma. The extent of glycosylation and sialylation are tissue and context specific. Glycated in plasma VLDL. Post-translationally, phosphorylated by FAM20C in the extracellular medium.

It is found in the secreted. The protein resides in the extracellular space. It localises to the extracellular matrix. Its subcellular location is the extracellular vesicle. The protein localises to the endosome. It is found in the multivesicular body. Functionally, APOE is an apolipoprotein, a protein associating with lipid particles, that mainly functions in lipoprotein-mediated lipid transport between organs via the plasma and interstitial fluids. APOE is a core component of plasma lipoproteins and is involved in their production, conversion and clearance. Apolipoproteins are amphipathic molecules that interact both with lipids of the lipoprotein particle core and the aqueous environment of the plasma. As such, APOE associates with chylomicrons, chylomicron remnants, very low density lipoproteins (VLDL) and intermediate density lipoproteins (IDL) but shows a preferential binding to high-density lipoproteins (HDL). It also binds a wide range of cellular receptors including the LDL receptor/LDLR, the LDL receptor-related proteins LRP1, LRP2 and LRP8 and the very low-density lipoprotein receptor/VLDLR that mediate the cellular uptake of the APOE-containing lipoprotein particles. Finally, APOE also has a heparin-binding activity and binds heparan-sulfate proteoglycans on the surface of cells, a property that supports the capture and the receptor-mediated uptake of APOE-containing lipoproteins by cells. A main function of APOE is to mediate lipoprotein clearance through the uptake of chylomicrons, VLDLs, and HDLs by hepatocytes. APOE is also involved in the biosynthesis by the liver of VLDLs as well as their uptake by peripheral tissues ensuring the delivery of triglycerides and energy storage in muscle, heart and adipose tissues. By participating in the lipoprotein-mediated distribution of lipids among tissues, APOE plays a critical role in plasma and tissues lipid homeostasis. APOE is also involved in two steps of reverse cholesterol transport, the HDLs-mediated transport of cholesterol from peripheral tissues to the liver, and thereby plays an important role in cholesterol homeostasis. First, it is functionally associated with ABCA1 in the biogenesis of HDLs in tissues. Second, it is enriched in circulating HDLs and mediates their uptake by hepatocytes. APOE also plays an important role in lipid transport in the central nervous system, regulating neuron survival and sprouting. The polypeptide is Apolipoprotein E (Apoe) (Tympanoctomys barrerae (Plains viscacha rat)).